Consider the following 359-residue polypeptide: Peptide chain release factor 1 (359 aa).

Residue Q235 is modified to N5-methylglutamine.

The protein belongs to the prokaryotic/mitochondrial release factor family. In terms of processing, methylated by PrmC. Methylation increases the termination efficiency of RF1.

The protein localises to the cytoplasm. Peptide chain release factor 1 directs the termination of translation in response to the peptide chain termination codons UAG and UAA. The chain is Peptide chain release factor 1 from Polynucleobacter asymbioticus (strain DSM 18221 / CIP 109841 / QLW-P1DMWA-1) (Polynucleobacter necessarius subsp. asymbioticus).